Reading from the N-terminus, the 111-residue chain is Large ribosomal subunit protein uL22 (111 aa).

The protein belongs to the universal ribosomal protein uL22 family. In terms of assembly, part of the 50S ribosomal subunit.

In terms of biological role, this protein binds specifically to 23S rRNA; its binding is stimulated by other ribosomal proteins, e.g. L4, L17, and L20. It is important during the early stages of 50S assembly. It makes multiple contacts with different domains of the 23S rRNA in the assembled 50S subunit and ribosome. Its function is as follows. The globular domain of the protein is located near the polypeptide exit tunnel on the outside of the subunit, while an extended beta-hairpin is found that lines the wall of the exit tunnel in the center of the 70S ribosome. The polypeptide is Large ribosomal subunit protein uL22 (Chlamydia pneumoniae (Chlamydophila pneumoniae)).